A 120-amino-acid polypeptide reads, in one-letter code: uncharacterized protein (120 aa).

The first 19 residues, 1 to 19, serve as a signal peptide directing secretion; that stretch reads MKKIVCAVVALLLTLPAWA.

This is an uncharacterized protein from Salmonella typhimurium (strain LT2 / SGSC1412 / ATCC 700720).